A 130-amino-acid polypeptide reads, in one-letter code: Protein ApaG (130 aa).

One can recognise an ApaG domain in the interval 3 to 127; sequence RAVTRHIEVT…FSLDSPDGKR (125 aa).

This Bradyrhizobium sp. (strain ORS 278) protein is Protein ApaG.